The primary structure comprises 148 residues: Snaclec stejaggregin-A subunit beta-2 (148 aa).

An N-terminal signal peptide occupies residues 1 to 23; it reads MGQFIFVSFGLLVVLLSLSGAGA. Cys27 and Cys38 form a disulfide bridge. Residues 34–145 form the C-type lectin domain; that stretch reads YDLYCYKVFK…CSRTHYVVCK (112 aa). Asn47 and Asn78 each carry an N-linked (GlcNAc...) asparagine glycan. Intrachain disulfides connect Cys55–Cys144 and Cys121–Cys136.

Belongs to the snaclec family. As to quaternary structure, heteromultimer; disulfide-linked. Expressed by the venom gland.

Its subcellular location is the secreted. Functionally, interferes with one step of hemostasis (modulation of platelet aggregation, or coagulation cascade, for example). The chain is Snaclec stejaggregin-A subunit beta-2 from Trimeresurus stejnegeri (Chinese green tree viper).